Reading from the N-terminus, the 114-residue chain is Large ribosomal subunit protein uL22 (114 aa).

This sequence belongs to the universal ribosomal protein uL22 family. Part of the 50S ribosomal subunit.

In terms of biological role, this protein binds specifically to 23S rRNA; its binding is stimulated by other ribosomal proteins, e.g. L4, L17, and L20. It is important during the early stages of 50S assembly. It makes multiple contacts with different domains of the 23S rRNA in the assembled 50S subunit and ribosome. Functionally, the globular domain of the protein is located near the polypeptide exit tunnel on the outside of the subunit, while an extended beta-hairpin is found that lines the wall of the exit tunnel in the center of the 70S ribosome. This Ehrlichia ruminantium (strain Gardel) protein is Large ribosomal subunit protein uL22.